The primary structure comprises 308 residues: Elongation factor Ts (308 aa).

Residues 80–83 form an involved in Mg(2+) ion dislocation from EF-Tu region; sequence TDFV.

This sequence belongs to the EF-Ts family.

The protein localises to the cytoplasm. Functionally, associates with the EF-Tu.GDP complex and induces the exchange of GDP to GTP. It remains bound to the aminoacyl-tRNA.EF-Tu.GTP complex up to the GTP hydrolysis stage on the ribosome. The polypeptide is Elongation factor Ts (Erythrobacter litoralis (strain HTCC2594)).